A 217-amino-acid chain; its full sequence is MAARCVRLARRSLPALALSFRPSPRLLCTATKQKNNGQNLDEDLGHCEPKTDPPSADKTLLEEKAKLEEQLRETMEKYKRALADTENLRQRSQKLVEEAKLYGIQGFCKDLLEVADILEKATQSVPKEEISNNNPHLKSLYEGLVMTEVQIQKVFTKHGLLRLDPIGAKFDPYEHEALFHTPVEGKEPGTVALVSKVGYKLHGRTLRPALVGVVKDA.

The transit peptide at 1–27 directs the protein to the mitochondrion; the sequence is MAARCVRLARRSLPALALSFRPSPRLL. The segment at 37–56 is disordered; the sequence is GQNLDEDLGHCEPKTDPPSA. Lysine 94 is subject to N6-acetyllysine; alternate. Lysine 94 bears the N6-succinyllysine; alternate mark. The residue at position 100 (lysine 100) is an N6-acetyllysine. Lysine 120 carries the N6-succinyllysine modification. Residue lysine 215 is modified to N6-acetyllysine; alternate. Lysine 215 is modified (N6-succinyllysine; alternate).

Belongs to the GrpE family. In terms of assembly, probable component of the PAM complex at least composed of a mitochondrial HSP70 protein, GRPEL1 or GRPEL2, TIMM44, TIMM16/PAM16 and TIMM14/DNAJC19. Binds to HSP70, HSC70 and HSJ1B.

The protein resides in the mitochondrion matrix. Functionally, essential component of the PAM complex, a complex required for the translocation of transit peptide-containing proteins from the inner membrane into the mitochondrial matrix in an ATP-dependent manner. Seems to control the nucleotide-dependent binding of mitochondrial HSP70 to substrate proteins. The sequence is that of GrpE protein homolog 1, mitochondrial (Grpel1) from Mus musculus (Mouse).